Reading from the N-terminus, the 109-residue chain is MFGKGGMGNMMKQAQQMQERMQKLQEEIANMEVTGESGAGLVKVTITGSHSVRRVDIDESLMEDDKEMLEDLIAAAFNDAARRVEETQKEKMAGVTGGMQLPPGMKMPF.

Disordered stretches follow at residues 1–22 (MFGK…ERMQ) and 88–109 (QKEK…KMPF). Low complexity predominate over residues 9 to 18 (NMMKQAQQMQ).

It belongs to the YbaB/EbfC family. In terms of assembly, homodimer.

The protein resides in the cytoplasm. It is found in the nucleoid. In terms of biological role, binds to DNA and alters its conformation. May be involved in regulation of gene expression, nucleoid organization and DNA protection. The chain is Nucleoid-associated protein VS_0917 from Vibrio atlanticus (strain LGP32) (Vibrio splendidus (strain Mel32)).